The primary structure comprises 311 residues: tRNA-cytidine(32) 2-sulfurtransferase (311 aa).

The short motif at 47-52 (SGGKDS) is the PP-loop motif element. Residues Cys-122, Cys-125, and Cys-213 each contribute to the [4Fe-4S] cluster site.

Belongs to the TtcA family. As to quaternary structure, homodimer. Mg(2+) is required as a cofactor. Requires [4Fe-4S] cluster as cofactor.

The protein resides in the cytoplasm. The enzyme catalyses cytidine(32) in tRNA + S-sulfanyl-L-cysteinyl-[cysteine desulfurase] + AH2 + ATP = 2-thiocytidine(32) in tRNA + L-cysteinyl-[cysteine desulfurase] + A + AMP + diphosphate + H(+). It functions in the pathway tRNA modification. Catalyzes the ATP-dependent 2-thiolation of cytidine in position 32 of tRNA, to form 2-thiocytidine (s(2)C32). The sulfur atoms are provided by the cysteine/cysteine desulfurase (IscS) system. In Salmonella typhi, this protein is tRNA-cytidine(32) 2-sulfurtransferase.